Here is a 355-residue protein sequence, read N- to C-terminus: Phenylalanine--tRNA ligase alpha subunit (355 aa).

Glutamate 273 contributes to the Mg(2+) binding site.

Belongs to the class-II aminoacyl-tRNA synthetase family. Phe-tRNA synthetase alpha subunit type 1 subfamily. As to quaternary structure, tetramer of two alpha and two beta subunits. Mg(2+) serves as cofactor.

It is found in the cytoplasm. It catalyses the reaction tRNA(Phe) + L-phenylalanine + ATP = L-phenylalanyl-tRNA(Phe) + AMP + diphosphate + H(+). This chain is Phenylalanine--tRNA ligase alpha subunit, found in Bifidobacterium longum subsp. infantis (strain ATCC 15697 / DSM 20088 / JCM 1222 / NCTC 11817 / S12).